The primary structure comprises 536 residues: Phosphoenolpyruvate carboxykinase (ATP) (536 aa).

The substrate site is built by R61, Y195, and K201. ATP is bound by residues K201, H220, and 236–244 (GLSGTGKTT). Positions 201 and 220 each coordinate Mn(2+). D257 lines the Mn(2+) pocket. 3 residues coordinate ATP: E285, R322, and T447. R322 is a substrate binding site.

This sequence belongs to the phosphoenolpyruvate carboxykinase (ATP) family. Requires Mn(2+) as cofactor.

The protein localises to the cytoplasm. The enzyme catalyses oxaloacetate + ATP = phosphoenolpyruvate + ADP + CO2. It functions in the pathway carbohydrate biosynthesis; gluconeogenesis. Its function is as follows. Involved in the gluconeogenesis. Catalyzes the conversion of oxaloacetate (OAA) to phosphoenolpyruvate (PEP) through direct phosphoryl transfer between the nucleoside triphosphate and OAA. The chain is Phosphoenolpyruvate carboxykinase (ATP) from Rhizobium meliloti (strain 1021) (Ensifer meliloti).